A 162-amino-acid polypeptide reads, in one-letter code: Phosphopantetheine adenylyltransferase (162 aa).

T10 contributes to the substrate binding site. ATP contacts are provided by residues 10–11 (TF) and H18. Residues K42, M74, and R88 each contribute to the substrate site. ATP is bound by residues 89–91 (GLR), E99, and 124–130 (YAFLSST).

Belongs to the bacterial CoaD family. In terms of assembly, homohexamer. It depends on Mg(2+) as a cofactor.

It localises to the cytoplasm. The enzyme catalyses (R)-4'-phosphopantetheine + ATP + H(+) = 3'-dephospho-CoA + diphosphate. The protein operates within cofactor biosynthesis; coenzyme A biosynthesis; CoA from (R)-pantothenate: step 4/5. In terms of biological role, reversibly transfers an adenylyl group from ATP to 4'-phosphopantetheine, yielding dephospho-CoA (dPCoA) and pyrophosphate. The sequence is that of Phosphopantetheine adenylyltransferase from Aliivibrio fischeri (strain ATCC 700601 / ES114) (Vibrio fischeri).